A 238-amino-acid chain; its full sequence is Probable transcriptional regulatory protein SSU98_0387 (238 aa).

This sequence belongs to the TACO1 family. YeeN subfamily.

Its subcellular location is the cytoplasm. This Streptococcus suis (strain 98HAH33) protein is Probable transcriptional regulatory protein SSU98_0387.